The primary structure comprises 349 residues: Phenylalanine--tRNA ligase alpha subunit (349 aa).

Glu258 is a Mg(2+) binding site.

Belongs to the class-II aminoacyl-tRNA synthetase family. Phe-tRNA synthetase alpha subunit type 1 subfamily. In terms of assembly, tetramer of two alpha and two beta subunits. Mg(2+) is required as a cofactor.

Its subcellular location is the cytoplasm. The enzyme catalyses tRNA(Phe) + L-phenylalanine + ATP = L-phenylalanyl-tRNA(Phe) + AMP + diphosphate + H(+). The polypeptide is Phenylalanine--tRNA ligase alpha subunit (Rickettsia akari (strain Hartford)).